A 351-amino-acid chain; its full sequence is UDP-3-O-acylglucosamine N-acyltransferase (351 aa).

Catalysis depends on H257, which acts as the Proton acceptor.

Belongs to the transferase hexapeptide repeat family. LpxD subfamily. Homotrimer.

It carries out the reaction a UDP-3-O-[(3R)-3-hydroxyacyl]-alpha-D-glucosamine + a (3R)-hydroxyacyl-[ACP] = a UDP-2-N,3-O-bis[(3R)-3-hydroxyacyl]-alpha-D-glucosamine + holo-[ACP] + H(+). It functions in the pathway bacterial outer membrane biogenesis; LPS lipid A biosynthesis. Its function is as follows. Catalyzes the N-acylation of UDP-3-O-acylglucosamine using 3-hydroxyacyl-ACP as the acyl donor. Is involved in the biosynthesis of lipid A, a phosphorylated glycolipid that anchors the lipopolysaccharide to the outer membrane of the cell. The protein is UDP-3-O-acylglucosamine N-acyltransferase of Methylorubrum extorquens (strain PA1) (Methylobacterium extorquens).